The primary structure comprises 93 residues: Small ribosomal subunit protein bS20 (93 aa).

The segment at 72–93 (KNTASRKKSRLTRKFNSVYKAS) is disordered. Residues 74–84 (TASRKKSRLTR) are compositionally biased toward basic residues.

This sequence belongs to the bacterial ribosomal protein bS20 family.

Functionally, binds directly to 16S ribosomal RNA. The chain is Small ribosomal subunit protein bS20 from Carboxydothermus hydrogenoformans (strain ATCC BAA-161 / DSM 6008 / Z-2901).